The chain runs to 251 residues: Isoprenyl transferase (251 aa).

The active site involves Asp24. Asp24 contributes to the Mg(2+) binding site. Substrate-binding positions include 25 to 28 (GNGR), Trp29, Arg37, His41, and 69 to 71 (STE). The Proton acceptor role is filled by Asn72. Substrate is bound by residues Trp73, Arg75, Arg186, and 192–194 (RIS). Glu205 is a Mg(2+) binding site.

Belongs to the UPP synthase family. In terms of assembly, homodimer. Mg(2+) serves as cofactor.

Functionally, catalyzes the condensation of isopentenyl diphosphate (IPP) with allylic pyrophosphates generating different type of terpenoids. The polypeptide is Isoprenyl transferase (Chromobacterium violaceum (strain ATCC 12472 / DSM 30191 / JCM 1249 / CCUG 213 / NBRC 12614 / NCIMB 9131 / NCTC 9757 / MK)).